The sequence spans 67 residues: Conotoxin Cl6.6a (67 aa).

A signal peptide spans 1–24; it reads MKLTCVLIAAVLLLAVCQLDSADA. The propeptide occupies 25–37; the sequence is TGYMRKNPSLRSP. Intrachain disulfides connect Cys43–Cys57, Cys50–Cys61, and Cys56–Cys65.

This sequence belongs to the conotoxin O1 superfamily. Expressed by the venom duct.

It is found in the secreted. This chain is Conotoxin Cl6.6a, found in Californiconus californicus (California cone).